The primary structure comprises 616 residues: Glutamine--fructose-6-phosphate aminotransferase [isomerizing] (616 aa).

Cysteine 2 functions as the Nucleophile; for GATase activity in the catalytic mechanism. One can recognise a Glutamine amidotransferase type-2 domain in the interval cysteine 2 to glutamate 221. SIS domains lie at leucine 288–threonine 428 and leucine 461–proline 606. The For Fru-6P isomerization activity role is filled by lysine 611.

As to quaternary structure, homodimer.

It is found in the cytoplasm. It carries out the reaction D-fructose 6-phosphate + L-glutamine = D-glucosamine 6-phosphate + L-glutamate. Its function is as follows. Catalyzes the first step in hexosamine metabolism, converting fructose-6P into glucosamine-6P using glutamine as a nitrogen source. The polypeptide is Glutamine--fructose-6-phosphate aminotransferase [isomerizing] (Leifsonia xyli subsp. xyli (strain CTCB07)).